The primary structure comprises 144 residues: HTH-type transcriptional regulator BilQ (144 aa).

The HTH marR-type domain maps to 1–134 (MEQTFAYYTT…LFTLLQKLGK (134 aa)). The segment at residues 48 to 71 (QRELAAAVRADEGYAARSVEKLLQ) is a DNA-binding region (H-T-H motif).

Its function is as follows. Transcription regulator that regulates expression of the bilirubin reductase operon (bilQ, bilR and bilS). In Clostridium symbiosum (strain WAL-14163), this protein is HTH-type transcriptional regulator BilQ.